A 354-amino-acid chain; its full sequence is Putative Xaa-Pro aminopeptidase (354 aa).

Mn(2+) contacts are provided by Asp213, Asp224, His290, Glu319, and Glu333.

This sequence belongs to the peptidase M24B family. Requires Mn(2+) as cofactor.

It catalyses the reaction Release of any N-terminal amino acid, including proline, that is linked to proline, even from a dipeptide or tripeptide.. In Mycoplasma genitalium (strain ATCC 33530 / DSM 19775 / NCTC 10195 / G37) (Mycoplasmoides genitalium), this protein is Putative Xaa-Pro aminopeptidase (pepP).